Consider the following 162-residue polypeptide: Large ribosomal subunit protein bL9 (162 aa).

It belongs to the bacterial ribosomal protein bL9 family.

Binds to the 23S rRNA. The polypeptide is Large ribosomal subunit protein bL9 (Chlorobaculum parvum (strain DSM 263 / NCIMB 8327) (Chlorobium vibrioforme subsp. thiosulfatophilum)).